A 483-amino-acid chain; its full sequence is Aspartyl/glutamyl-tRNA(Asn/Gln) amidotransferase subunit B (483 aa).

It belongs to the GatB/GatE family. GatB subfamily. In terms of assembly, heterotrimer of A, B and C subunits.

It carries out the reaction L-glutamyl-tRNA(Gln) + L-glutamine + ATP + H2O = L-glutaminyl-tRNA(Gln) + L-glutamate + ADP + phosphate + H(+). The enzyme catalyses L-aspartyl-tRNA(Asn) + L-glutamine + ATP + H2O = L-asparaginyl-tRNA(Asn) + L-glutamate + ADP + phosphate + 2 H(+). Functionally, allows the formation of correctly charged Asn-tRNA(Asn) or Gln-tRNA(Gln) through the transamidation of misacylated Asp-tRNA(Asn) or Glu-tRNA(Gln) in organisms which lack either or both of asparaginyl-tRNA or glutaminyl-tRNA synthetases. The reaction takes place in the presence of glutamine and ATP through an activated phospho-Asp-tRNA(Asn) or phospho-Glu-tRNA(Gln). This Rickettsia rickettsii (strain Sheila Smith) protein is Aspartyl/glutamyl-tRNA(Asn/Gln) amidotransferase subunit B.